We begin with the raw amino-acid sequence, 493 residues long: D-glyceraldehyde dehydrogenase (NADP(+)) (493 aa).

A coiled-coil region spans residues 70-92 (RAKELIEKNRAELENIIMEENGK). NADP(+) contacts are provided by residues 146 to 149 (TPWN), Arg-157, 172 to 176 (KPSSD), 204 to 210 (RGSEIGD), 225 to 248 (GSTA…ILEL), Cys-281, and 381 to 383 (EIF). The substrate site is built by Asn-149 and Arg-157. The Proton acceptor role is filled by Glu-247. Cys-281 contacts substrate. Cys-281 functions as the Proton donor in the catalytic mechanism.

The protein belongs to the aldehyde dehydrogenase family. Glyceraldehyde dehydrogenase subfamily. In terms of assembly, homotetramer. Dimer of dimers.

It catalyses the reaction D-glyceraldehyde + NADP(+) + H2O = (R)-glycerate + NADPH + 2 H(+). Its pathway is carbohydrate degradation; glycolysis. With respect to regulation, inhibited by calcium, cadmium, copper and mercury ions. Stable for 2 hours at 60 degrees Celsius but activity is decreased to less than 50 percent within 20 minutes at 80 degrees Celsius. Two folds activity enhancement in the presence of 1 mM glutathione, DTT, or 2-mercaptoethanol. Complete activity inhibition by thiol-modifying reagents such as p-chloromercuribenzoic acid or p-hydroxy-mercuribenzoic acid. NADP-dependent dehydrogenase of the nED (non-phosphorylated Entner-Doudoroff) pathway with highest activity towards glyceraldehydes (e.g. D,L-glyceraldehyde and D-glyceraldehyde), to a lesser extent towards D,L-glyceraldehyde-3-phosphate and glycolaldehyde, but no activity towards aliphatic or aromatic aldehydes. This chain is D-glyceraldehyde dehydrogenase (NADP(+)), found in Thermoplasma acidophilum (strain ATCC 25905 / DSM 1728 / JCM 9062 / NBRC 15155 / AMRC-C165).